Here is a 274-residue protein sequence, read N- to C-terminus: F-box protein SKIP5 (274 aa).

The region spanning 32-79 (LTSLNNLDDGCLMHILSFLSPIPDRYNTALVCHRWRYLACHPRLWLRV) is the F-box domain.

In terms of assembly, part of a SCF (SKP1-cullin-F-box) protein ligase complex. Interacts with SKP1A/ASK1.

It participates in protein modification; protein ubiquitination. The protein is F-box protein SKIP5 (SKIP5) of Arabidopsis thaliana (Mouse-ear cress).